The chain runs to 506 residues: MPDTTPQLRLYNTLTRTKEAFAPIDAKNVRMYVCGPTVYDFAHIGNARPVIVFDVLFRLLRHVYGAQHVTYARNITDVDDKINARAARDYPDLPFNEAIRKVTESTNAQFQADVTALGNLQPTVQPRATEHMDEMRAMIDRLVQRGVAYVAQDHVLFSPSAMNARKGPRYGALARRSLDEMLAGARVDVASYKRDEMDFVLWKPSKKGEPGWPSPAGIETLGRPGWHIECSAMSMAKLLEPFGGGLKCDDPERNQFDIHGGGIDLVFPHHENEIAQSCCALGTERMANIWMHNGFLQVEGQKMSKSLGNFITIRDVLNDGLPQLGEWGDNTVRDRWAGLAARLSMLQTHYREPINWTAQRLAESADELHRWYGLLRDEGFGAPEKLSHASAVAAALCDDLNSWAAITALRQAFKVRDVAALGEGMALMGLLDPYFVTASDVPIFARADVDASAIAARIAERLNFINAKNWAEADRIRDELLQEGVQLKDSKDPATGERITTWDVVG.

Cysteine 34 contacts Zn(2+). The 'HIGH' region signature appears at 36–46 (PTVYDFAHIGN). The Zn(2+) site is built by cysteine 230, histidine 269, and glutamate 273. The short motif at 302–306 (KMSKS) is the 'KMSKS' region element. Lysine 305 provides a ligand contact to ATP.

This sequence belongs to the class-I aminoacyl-tRNA synthetase family. Monomer. Zn(2+) serves as cofactor.

It is found in the cytoplasm. It catalyses the reaction tRNA(Cys) + L-cysteine + ATP = L-cysteinyl-tRNA(Cys) + AMP + diphosphate. The chain is Cysteine--tRNA ligase from Brucella melitensis biotype 2 (strain ATCC 23457).